We begin with the raw amino-acid sequence, 203 residues long: Urease accessory protein UreG (203 aa).

14–21 serves as a coordination point for GTP; the sequence is GPVGSGKT.

The protein belongs to the SIMIBI class G3E GTPase family. UreG subfamily. Homodimer. UreD, UreF and UreG form a complex that acts as a GTP-hydrolysis-dependent molecular chaperone, activating the urease apoprotein by helping to assemble the nickel containing metallocenter of UreC. The UreE protein probably delivers the nickel.

It is found in the cytoplasm. Its function is as follows. Facilitates the functional incorporation of the urease nickel metallocenter. This process requires GTP hydrolysis, probably effectuated by UreG. This chain is Urease accessory protein UreG, found in Sinorhizobium fredii (strain NBRC 101917 / NGR234).